Reading from the N-terminus, the 309-residue chain is Protoheme IX farnesyltransferase (309 aa).

9 helical membrane passes run 35 to 55, 64 to 84, 114 to 134, 135 to 155, 161 to 181, 187 to 207, 236 to 256, 257 to 277, and 289 to 309; these read IGIV…ALYF, LHIV…SCSI, VLWL…MTTV, TAAI…TMWS, LNTV…WTAV, VVPL…FLAL, IVVW…LGVP, FLTV…YGFK, and FIYS…ATLW.

Belongs to the UbiA prenyltransferase family. Protoheme IX farnesyltransferase subfamily. As to quaternary structure, interacts with CtaA.

Its subcellular location is the cell membrane. It catalyses the reaction heme b + (2E,6E)-farnesyl diphosphate + H2O = Fe(II)-heme o + diphosphate. Its pathway is porphyrin-containing compound metabolism; heme O biosynthesis; heme O from protoheme: step 1/1. Converts heme B (protoheme IX) to heme O by substitution of the vinyl group on carbon 2 of heme B porphyrin ring with a hydroxyethyl farnesyl side group. In Geobacillus sp. (strain WCH70), this protein is Protoheme IX farnesyltransferase.